The chain runs to 78 residues: Acyl carrier protein (78 aa).

A Carrier domain is found at 2–77 (STIEERVKKI…AAIDYVNSHQ (76 aa)). Ser-37 is modified (O-(pantetheine 4'-phosphoryl)serine).

It belongs to the acyl carrier protein (ACP) family. Post-translationally, 4'-phosphopantetheine is transferred from CoA to a specific serine of apo-ACP by AcpS. This modification is essential for activity because fatty acids are bound in thioester linkage to the sulfhydryl of the prosthetic group.

The protein localises to the cytoplasm. The protein operates within lipid metabolism; fatty acid biosynthesis. Functionally, carrier of the growing fatty acid chain in fatty acid biosynthesis. The chain is Acyl carrier protein from Pseudomonas putida (strain W619).